The primary structure comprises 428 residues: Serine--tRNA ligase (428 aa).

231–233 (TAE) serves as a coordination point for L-serine. 262 to 264 (RAE) serves as a coordination point for ATP. Glutamate 285 provides a ligand contact to L-serine. 349 to 352 (EISS) is a binding site for ATP. Serine 385 provides a ligand contact to L-serine.

This sequence belongs to the class-II aminoacyl-tRNA synthetase family. Type-1 seryl-tRNA synthetase subfamily. Homodimer. The tRNA molecule binds across the dimer.

The protein localises to the cytoplasm. The enzyme catalyses tRNA(Ser) + L-serine + ATP = L-seryl-tRNA(Ser) + AMP + diphosphate + H(+). It carries out the reaction tRNA(Sec) + L-serine + ATP = L-seryl-tRNA(Sec) + AMP + diphosphate + H(+). It functions in the pathway aminoacyl-tRNA biosynthesis; selenocysteinyl-tRNA(Sec) biosynthesis; L-seryl-tRNA(Sec) from L-serine and tRNA(Sec): step 1/1. Catalyzes the attachment of serine to tRNA(Ser). Is also able to aminoacylate tRNA(Sec) with serine, to form the misacylated tRNA L-seryl-tRNA(Sec), which will be further converted into selenocysteinyl-tRNA(Sec). This is Serine--tRNA ligase from Methylorubrum extorquens (strain PA1) (Methylobacterium extorquens).